Here is a 325-residue protein sequence, read N- to C-terminus: CRISPR-associated endonuclease Cas1 3 (325 aa).

3 residues coordinate Mn(2+): Glu-152, His-217, and Glu-232.

The protein belongs to the CRISPR-associated endonuclease Cas1 family. Homodimer, forms a heterotetramer with a Cas2 homodimer. Mg(2+) serves as cofactor. Requires Mn(2+) as cofactor.

CRISPR (clustered regularly interspaced short palindromic repeat), is an adaptive immune system that provides protection against mobile genetic elements (viruses, transposable elements and conjugative plasmids). CRISPR clusters contain spacers, sequences complementary to antecedent mobile elements, and target invading nucleic acids. CRISPR clusters are transcribed and processed into CRISPR RNA (crRNA). Acts as a dsDNA endonuclease. Involved in the integration of spacer DNA into the CRISPR cassette. The sequence is that of CRISPR-associated endonuclease Cas1 3 from Thermodesulfovibrio yellowstonii (strain ATCC 51303 / DSM 11347 / YP87).